The chain runs to 199 residues: Small ribosomal subunit protein uS4 (199 aa).

An S4 RNA-binding domain is found at 91–154 (SRLDNVVYRL…KDLIIVKEAL (64 aa)).

The protein belongs to the universal ribosomal protein uS4 family. Part of the 30S ribosomal subunit. Contacts protein S5. The interaction surface between S4 and S5 is involved in control of translational fidelity.

One of the primary rRNA binding proteins, it binds directly to 16S rRNA where it nucleates assembly of the body of the 30S subunit. In terms of biological role, with S5 and S12 plays an important role in translational accuracy. This chain is Small ribosomal subunit protein uS4, found in Phytoplasma mali (strain AT).